A 149-amino-acid chain; its full sequence is MRFWGSFLLVVILDRISKAWVLASFLPRESRSLIEGGLYLTYVQNRGAAFGLMPGKSWLFFISALLVIMALVIYNWRSKASPLEALSTGLIAGGALGNLIDRYFYGFVIDFIDLGWWPVFNLADSAIVCGGILLLILVLLDGKREERNA.

The next 2 membrane-spanning stretches (helical) occupy residues 53–73 (MPGKSWLFFISALLVIMALVI) and 89–109 (GLIAGGALGNLIDRYFYGFVI). Catalysis depends on residues aspartate 110 and aspartate 124. Residues 119–139 (VFNLADSAIVCGGILLLILVL) traverse the membrane as a helical segment.

It belongs to the peptidase A8 family.

The protein localises to the cell membrane. It carries out the reaction Release of signal peptides from bacterial membrane prolipoproteins. Hydrolyzes -Xaa-Yaa-Zaa-|-(S,diacylglyceryl)Cys-, in which Xaa is hydrophobic (preferably Leu), and Yaa (Ala or Ser) and Zaa (Gly or Ala) have small, neutral side chains.. The protein operates within protein modification; lipoprotein biosynthesis (signal peptide cleavage). In terms of biological role, this protein specifically catalyzes the removal of signal peptides from prolipoproteins. The chain is Lipoprotein signal peptidase from Syntrophomonas wolfei subsp. wolfei (strain DSM 2245B / Goettingen).